The chain runs to 363 residues: Dihydroorotate dehydrogenase (quinone) (363 aa).

FMN contacts are provided by residues 62–66 (AGYDK) and threonine 86. Residue lysine 66 participates in substrate binding. 111-115 (NRLGF) provides a ligand contact to substrate. Residues asparagine 140 and asparagine 171 each contribute to the FMN site. Substrate is bound at residue asparagine 171. The active-site Nucleophile is the serine 174. Asparagine 176 is a substrate binding site. FMN is bound by residues lysine 216 and serine 244. Substrate is bound at residue 245–246 (NT). Residues glycine 267, glycine 296, and 317-318 (YS) each bind FMN.

It belongs to the dihydroorotate dehydrogenase family. Type 2 subfamily. Monomer. It depends on FMN as a cofactor.

It is found in the cell membrane. The enzyme catalyses (S)-dihydroorotate + a quinone = orotate + a quinol. It functions in the pathway pyrimidine metabolism; UMP biosynthesis via de novo pathway; orotate from (S)-dihydroorotate (quinone route): step 1/1. In terms of biological role, catalyzes the conversion of dihydroorotate to orotate with quinone as electron acceptor. The protein is Dihydroorotate dehydrogenase (quinone) of Allorhizobium ampelinum (strain ATCC BAA-846 / DSM 112012 / S4) (Agrobacterium vitis (strain S4)).